The sequence spans 215 residues: Orotate phosphoribosyltransferase (215 aa).

Lys26 contacts 5-phospho-alpha-D-ribose 1-diphosphate. Orotate is bound at residue 34 to 35; sequence FF. 5-phospho-alpha-D-ribose 1-diphosphate is bound by residues 72–73, Arg99, Lys100, Lys103, His105, and 125–133; these read YK and DDVISSGIS. 2 residues coordinate orotate: Ser129 and Arg157.

Belongs to the purine/pyrimidine phosphoribosyltransferase family. PyrE subfamily. As to quaternary structure, homodimer. Mg(2+) serves as cofactor.

It catalyses the reaction orotidine 5'-phosphate + diphosphate = orotate + 5-phospho-alpha-D-ribose 1-diphosphate. It participates in pyrimidine metabolism; UMP biosynthesis via de novo pathway; UMP from orotate: step 1/2. In terms of biological role, catalyzes the transfer of a ribosyl phosphate group from 5-phosphoribose 1-diphosphate to orotate, leading to the formation of orotidine monophosphate (OMP). This chain is Orotate phosphoribosyltransferase, found in Halorhodospira halophila (strain DSM 244 / SL1) (Ectothiorhodospira halophila (strain DSM 244 / SL1)).